The following is a 473-amino-acid chain: MAPALPWLLLWVGSGVLPVHGTQDGIRLPLRSGLAGAPLGLRLPRETDEEPGRRGSFVEMVDNLRGKSGQGYYVEMTVGSPPQTLNILVDTGSSNFAVGAAPHPFLHRYYQRQRSSTYRDLRKGVYVPYTQGKWEGELGTDLVSIPHGPNVTVRANIAAITESDKFFINGSNWEGILGLAYAEIARLCGAGFPLNQSEAVASVGGSMIIGGIDHSLYTGNLWYTPIRREWYYEVIIVRVEINGQDLKMDCKEYNYDKSIVDSGTTNLRLPKKVFEAAVKSIKAASSTEKFPDGFWLGEQLVCWQAGTTPWNIFPVISLYLMGEVTNQSFRITILPQQYLRPVEDVATSQDDCYKFAISQSSTGTVMGAVIMEGFYVVFDRARKRIGFAVSACHVHDEFRTATVEGPFVTPDMEDCGYNIPQTDESTLMTIAYVMAAICALFMLPLCLMVCQWRCLRCLRHQHDDFADDISLLK.

A signal peptide spans 1–21; that stretch reads MAPALPWLLLWVGSGVLPVHG. A propeptide spanning residues 22–45 is cleaved from the precursor; it reads TQDGIRLPLRSGLAGAPLGLRLPR. Over 22–429 the chain is Extracellular; that stretch reads TQDGIRLPLR…PQTDESTLMT (408 aa). Residues 72 to 388 enclose the Peptidase A1 domain; it reads YYVEMTVGSP…DRARKRIGFA (317 aa). Aspartate 90 is a catalytic residue. Lysine 123 carries the post-translational modification N6-acetyllysine. N-linked (GlcNAc...) asparagine glycosylation is found at asparagine 150, asparagine 169, and asparagine 195. 3 disulfide bridges follow: cysteine 188–cysteine 392, cysteine 250–cysteine 415, and cysteine 302–cysteine 352. N6-acetyllysine occurs at positions 247, 251, and 257. Aspartate 261 is an active-site residue. N6-acetyllysine occurs at positions 271, 272, and 279. The N-linked (GlcNAc...) asparagine glycan is linked to asparagine 326. A helical membrane pass occupies residues 430 to 450; sequence IAYVMAAICALFMLPLCLMVC. Residues cysteine 446, cysteine 450, cysteine 454, and cysteine 457 are each lipidated (S-palmitoyl cysteine). Topologically, residues 451-473 are cytoplasmic; that stretch reads QWRCLRCLRHQHDDFADDISLLK. Residues 451–473 form an interaction with RTN3 region; it reads QWRCLRCLRHQHDDFADDISLLK. The short motif at 468–472 is the DXXLL element; that stretch reads DISLL. Serine 470 carries the phosphoserine modification. Lysine 473 is covalently cross-linked (Glycyl lysine isopeptide (Lys-Gly) (interchain with G-Cter in ubiquitin)).

This sequence belongs to the peptidase A1 family. As to quaternary structure, monomer. Interacts (via DXXLL motif) with GGA1, GGA2 and GGA3 (via their VHS domain); the interaction highly increases when BACE1 is phosphorylated at Ser-470. Interacts with RTN1; RTN2; RTN3 and RTN4; the interaction leads to inhibition of amyloid precursor protein processing. Interacts with SNX6. Interacts with PCSK9. Interacts with NAT8 and NAT8B. Interacts with BIN1. Interacts (via extracellular domain) with ADAM10 (via extracellular domain). Interacts with SORL1; this interaction may affect binding with APP and hence reduce APP cleavage. Interacts with NRDC AND NRG1. Palmitoylation mediates lipid raft localization. In terms of processing, acetylated in the endoplasmic reticulum at Lys-123, Lys-247, Lys-251, Lys-257, Lys-271, Lys-272, and Lys-279. Acetylation by NAT8 and NAT8B is transient and deacetylation probably occurs in the Golgi. Acetylation regulates the maturation, the transport to the plasma membrane, the stability and the expression of the protein. Post-translationally, ubiquitinated at Lys-473, ubiquitination leads to lysosomal degradation. Monoubiquitinated and 'Lys-63'-linked polyubitinated. Deubiquitnated by USP8; inhibits lysosomal degradation. Phosphorylation at Ser-470 is required for interaction with GGA1 and retrograded transport from endosomal compartments to the trans-Golgi network. Non-phosphorylated BACE1 enters a direct recycling route to the cell surface. In terms of processing, N-Glycosylated. Addition of a bisecting N-acetylglucosamine by MGAT3 blocks lysosomal targeting, further degradation and is required for maintaining stability under stress conditions.

Its subcellular location is the cell membrane. The protein localises to the golgi apparatus. It localises to the trans-Golgi network. It is found in the endoplasmic reticulum. The protein resides in the endosome. Its subcellular location is the cell surface. The protein localises to the cytoplasmic vesicle membrane. It localises to the membrane raft. It is found in the lysosome. The protein resides in the late endosome. Its subcellular location is the early endosome. The protein localises to the recycling endosome. It localises to the cell projection. It is found in the axon. The protein resides in the dendrite. It catalyses the reaction Broad endopeptidase specificity. Cleaves Glu-Val-Asn-Leu-|-Asp-Ala-Glu-Phe in the Swedish variant of Alzheimer's amyloid precursor protein.. With respect to regulation, inhibited by RTN3 and RTN4. Functionally, responsible for the proteolytic processing of the amyloid precursor protein (APP). Cleaves at the N-terminus of the A-beta peptide sequence, between residues 671 and 672 of APP, leads to the generation and extracellular release of beta-cleaved soluble APP, and a corresponding cell-associated C-terminal fragment which is later released by gamma-secretase. Cleaves CHL1. The sequence is that of Beta-secretase 1 (BACE1) from Cavia porcellus (Guinea pig).